The chain runs to 115 residues: Protein V2 (115 aa).

It belongs to the geminiviridae protein AV2/V2 family. In terms of assembly, interacts with host SGS3.

The protein resides in the host cytoplasm. It localises to the host perinuclear region. Its function is as follows. Through its interaction with host SGS3, acts as a suppressor of RNA-mediated gene silencing, also known as post-transcriptional gene silencing (PTGS), a mechanism of plant viral defense that limits the accumulation of viral RNAs. This is Protein V2 from Tomato yellow leaf curl Sardinia virus (isolate Spain-2) (TYLCSV).